The following is an 83-amino-acid chain: Cell division topological specificity factor (83 aa).

This sequence belongs to the MinE family.

Prevents the cell division inhibition by proteins MinC and MinD at internal division sites while permitting inhibition at polar sites. This ensures cell division at the proper site by restricting the formation of a division septum at the midpoint of the long axis of the cell. This Buchnera aphidicola subsp. Acyrthosiphon pisum (strain 5A) protein is Cell division topological specificity factor.